The chain runs to 209 residues: NAD-reducing hydrogenase HoxS subunit delta (209 aa).

In terms of assembly, tetramer of an alpha and a gamma subunits (flavin-containing dimer), and a delta and a nickel-containing beta subunits (hydrogenase dimer). [4Fe-4S] cluster is required as a cofactor. It depends on [3Fe-4S] cluster as a cofactor. Requires [2Fe-2S] cluster as cofactor. The cofactor is FMN. Ni(2+) serves as cofactor.

The protein resides in the cytoplasm. The catalysed reaction is H2 + NAD(+) = NADH + H(+). This Cupriavidus necator (strain ATCC 17699 / DSM 428 / KCTC 22496 / NCIMB 10442 / H16 / Stanier 337) (Ralstonia eutropha) protein is NAD-reducing hydrogenase HoxS subunit delta (hoxY).